Reading from the N-terminus, the 172-residue chain is Xanthine-guanine phosphoribosyltransferase (172 aa).

Residues 47–48 and 106–114 each bind 5-phospho-alpha-D-ribose 1-diphosphate; these read RG and DDLVDTGKT. Residue Asp107 participates in Mg(2+) binding. Residues Asp110 and Ile153 each contribute to the guanine site. Residues Asp110 and Ile153 each coordinate xanthine. GMP is bound by residues 110-114 and 152-153; these read DTGKT and WI.

The protein belongs to the purine/pyrimidine phosphoribosyltransferase family. XGPT subfamily. Homotetramer. Mg(2+) serves as cofactor.

It is found in the cell inner membrane. It catalyses the reaction GMP + diphosphate = guanine + 5-phospho-alpha-D-ribose 1-diphosphate. The catalysed reaction is XMP + diphosphate = xanthine + 5-phospho-alpha-D-ribose 1-diphosphate. It carries out the reaction IMP + diphosphate = hypoxanthine + 5-phospho-alpha-D-ribose 1-diphosphate. It participates in purine metabolism; GMP biosynthesis via salvage pathway; GMP from guanine: step 1/1. Its pathway is purine metabolism; XMP biosynthesis via salvage pathway; XMP from xanthine: step 1/1. In terms of biological role, purine salvage pathway enzyme that catalyzes the transfer of the ribosyl-5-phosphate group from 5-phospho-alpha-D-ribose 1-diphosphate (PRPP) to the N9 position of the 6-oxopurines guanine and xanthine to form the corresponding ribonucleotides GMP (guanosine 5'-monophosphate) and XMP (xanthosine 5'-monophosphate), with the release of PPi. To a lesser extent, also acts on hypoxanthine. The protein is Xanthine-guanine phosphoribosyltransferase of Rhodopseudomonas palustris (strain BisB5).